A 788-amino-acid polypeptide reads, in one-letter code: Protein HHLF1 (788 aa).

Disordered regions lie at residues 1–82 (MAQR…NFWH), 366–385 (TGTA…ETEA), and 609–663 (IHKK…SRLP). Residues 16–25 (RGRGAGGPSG) show a composition bias toward gly residues. Residues 26-56 (VGSSPPSSCVPMGAPSTAGTGASAAATTTPG) show a composition bias toward low complexity. The RNA-binding stretch occupies residues 74-248 (SGNNSNFWHG…HGAGEVVRLY (175 aa)). The segment covering 650-659 (LRRDDEDWKP) has biased composition (basic and acidic residues). Residues 671-788 (LDETFWVLGS…IATHYHYNAQ (118 aa)) form an interaction with host EIF2AK2/PKR region.

It belongs to the herpesviridae US22 family. In terms of assembly, interacts with host EIF2AK2/PKR; this interaction retains EIF2AK2 to the host nucleus and prevents its activation. Interaction (via N-terminus) with host BECN1; this interaction inhibits host autophagy. Interacts with the viral DNA polymerase accessory subunit UL44. Interacts with host HSPA5.

It is found in the virion. Its subcellular location is the host cytoplasm. It localises to the host nucleus. Inhibits the establishment of the antiviral state and the integrated stress response (ISR) in the infected cell. Prevents the phosphorylation of the host eukaryotic translation initiation factor eIF-2alpha/EIF2S1 and thus the shutoff of viral and cellular protein synthesis by directly interacting with EIF2AK2/PKR. Prevents stress granule formation in response to eIF-2alpha/EIF2S1 phosphorylation, thereby rescuing viral replication and protein synthesis. Also inhibits host autophagy by interacting with host Beclin-1/BECN1. The protein is Protein HHLF1 (TRS1) of Homo sapiens (Human).